The chain runs to 362 residues: Phosphoserine aminotransferase (362 aa).

L-glutamate is bound by residues S9 and R42. Pyridoxal 5'-phosphate contacts are provided by residues 76–77, W102, T153, D174, and Q197; that span reads GR. K198 is modified (N6-(pyridoxal phosphate)lysine). Pyridoxal 5'-phosphate is bound at residue 239 to 240; sequence NT.

It belongs to the class-V pyridoxal-phosphate-dependent aminotransferase family. SerC subfamily. In terms of assembly, homodimer. Requires pyridoxal 5'-phosphate as cofactor.

Its subcellular location is the cytoplasm. It catalyses the reaction O-phospho-L-serine + 2-oxoglutarate = 3-phosphooxypyruvate + L-glutamate. The catalysed reaction is 4-(phosphooxy)-L-threonine + 2-oxoglutarate = (R)-3-hydroxy-2-oxo-4-phosphooxybutanoate + L-glutamate. Its pathway is amino-acid biosynthesis; L-serine biosynthesis; L-serine from 3-phospho-D-glycerate: step 2/3. It participates in cofactor biosynthesis; pyridoxine 5'-phosphate biosynthesis; pyridoxine 5'-phosphate from D-erythrose 4-phosphate: step 3/5. Its function is as follows. Catalyzes the reversible conversion of 3-phosphohydroxypyruvate to phosphoserine and of 3-hydroxy-2-oxo-4-phosphonooxybutanoate to phosphohydroxythreonine. This chain is Phosphoserine aminotransferase, found in Escherichia coli O139:H28 (strain E24377A / ETEC).